We begin with the raw amino-acid sequence, 439 residues long: Xylose isomerase (439 aa).

Residues H101 and D104 contribute to the active site. Mg(2+)-binding residues include E232, E268, H271, D296, D307, D309, and D339.

This sequence belongs to the xylose isomerase family. As to quaternary structure, homotetramer. It depends on Mg(2+) as a cofactor.

Its subcellular location is the cytoplasm. It carries out the reaction alpha-D-xylose = alpha-D-xylulofuranose. The polypeptide is Xylose isomerase (Marinomonas sp. (strain MWYL1)).